Consider the following 505-residue polypeptide: Cytochrome P450 71A2 (505 aa).

A helical membrane pass occupies residues 7–27 (WYSLLIPLFVFIFLLIHHCFF). Cys-448 contacts heme.

This sequence belongs to the cytochrome P450 family. The cofactor is heme.

Its subcellular location is the membrane. In terms of biological role, may have a role in maturation, such as during flavor formation or other metabolite production specific to aging tissues. This chain is Cytochrome P450 71A2 (CYP71A2), found in Solanum melongena (Eggplant).